The sequence spans 275 residues: 3-methyl-2-oxobutanoate hydroxymethyltransferase (275 aa).

Mg(2+) is bound by residues D49 and D88. 3-methyl-2-oxobutanoate is bound by residues 49–50 (DS), D88, and K118. Residue E120 coordinates Mg(2+). Catalysis depends on E187, which acts as the Proton acceptor.

Belongs to the PanB family. In terms of assembly, homodecamer; pentamer of dimers. It depends on Mg(2+) as a cofactor.

The protein resides in the cytoplasm. The catalysed reaction is 3-methyl-2-oxobutanoate + (6R)-5,10-methylene-5,6,7,8-tetrahydrofolate + H2O = 2-dehydropantoate + (6S)-5,6,7,8-tetrahydrofolate. It participates in cofactor biosynthesis; (R)-pantothenate biosynthesis; (R)-pantoate from 3-methyl-2-oxobutanoate: step 1/2. Functionally, catalyzes the reversible reaction in which hydroxymethyl group from 5,10-methylenetetrahydrofolate is transferred onto alpha-ketoisovalerate to form ketopantoate. The sequence is that of 3-methyl-2-oxobutanoate hydroxymethyltransferase from Bordetella petrii (strain ATCC BAA-461 / DSM 12804 / CCUG 43448).